The primary structure comprises 516 residues: Gamma-aminobutyrate transaminase 1, mitochondrial (516 aa).

The N-terminal 47 residues, 1–47 (MVIARGLLRSNASSSSSQAINLLKYVTSTGSLQGHTQNLCDASTRHF), are a transit peptide targeting the mitochondrion. The span at 45–60 (RHFSSVPSPQSNSTEE) shows a compositional bias: polar residues. The disordered stretch occupies residues 45 to 64 (RHFSSVPSPQSNSTEENGFK). 171–172 (GS) is a pyridoxal 5'-phosphate binding site. Tyr204 is a substrate binding site. Asp311 is a pyridoxal 5'-phosphate binding site. A substrate-binding site is contributed by Lys340. Lys340 carries the N6-(pyridoxal phosphate)lysine modification.

This sequence belongs to the class-III pyridoxal-phosphate-dependent aminotransferase family.

It localises to the mitochondrion. The enzyme catalyses 4-aminobutanoate + pyruvate = succinate semialdehyde + L-alanine. The catalysed reaction is 4-aminobutanoate + glyoxylate = succinate semialdehyde + glycine. In terms of biological role, transaminase that degrades gamma-amino butyric acid (GABA) and uses pyruvate as amino-group acceptor, but not 2-oxoglutarate. This Oryza sativa subsp. indica (Rice) protein is Gamma-aminobutyrate transaminase 1, mitochondrial.